Reading from the N-terminus, the 159-residue chain is F1845 fimbrial protein (159 aa).

An N-terminal signal peptide occupies residues 1–21; it reads MKKLAIMAAASMIFTVGSAQA.

It belongs to the Dr-adhesin family.

It localises to the fimbrium. Hemagglutinins of uropathogenic E.coli mediate adherence to the upper urinary tract. These adhesins bind to the Dr blood group antigen and also agglutinate human erythrocytes in the presence of D-mannose (mannose-resistant hemagglutination (MRHA)). C1845 is a strain responsible for diarrheal disease. This is F1845 fimbrial protein (daaE) from Escherichia coli.